A 399-amino-acid chain; its full sequence is Dual-specificity RNA methyltransferase RlmN (399 aa).

The active-site Proton acceptor is the E122. Residues 128 to 371 (ETDRGTLCVS…VRTPRGRDIL (244 aa)) form the Radical SAM core domain. C135 and C374 form a disulfide bridge. 3 residues coordinate [4Fe-4S] cluster: C142, C146, and C149. S-adenosyl-L-methionine contacts are provided by residues 200-201 (GE), S232, 254-256 (SLH), and N331. C374 (S-methylcysteine intermediate) is an active-site residue.

Belongs to the radical SAM superfamily. RlmN family. It depends on [4Fe-4S] cluster as a cofactor.

The protein localises to the cytoplasm. The catalysed reaction is adenosine(2503) in 23S rRNA + 2 reduced [2Fe-2S]-[ferredoxin] + 2 S-adenosyl-L-methionine = 2-methyladenosine(2503) in 23S rRNA + 5'-deoxyadenosine + L-methionine + 2 oxidized [2Fe-2S]-[ferredoxin] + S-adenosyl-L-homocysteine. It catalyses the reaction adenosine(37) in tRNA + 2 reduced [2Fe-2S]-[ferredoxin] + 2 S-adenosyl-L-methionine = 2-methyladenosine(37) in tRNA + 5'-deoxyadenosine + L-methionine + 2 oxidized [2Fe-2S]-[ferredoxin] + S-adenosyl-L-homocysteine. Its function is as follows. Specifically methylates position 2 of adenine 2503 in 23S rRNA and position 2 of adenine 37 in tRNAs. m2A2503 modification seems to play a crucial role in the proofreading step occurring at the peptidyl transferase center and thus would serve to optimize ribosomal fidelity. The sequence is that of Dual-specificity RNA methyltransferase RlmN from Rhodopseudomonas palustris (strain ATCC BAA-98 / CGA009).